The chain runs to 221 residues: Urease accessory protein UreF (221 aa).

This sequence belongs to the UreF family. UreD, UreF and UreG form a complex that acts as a GTP-hydrolysis-dependent molecular chaperone, activating the urease apoprotein by helping to assemble the nickel containing metallocenter of UreC. The UreE protein probably delivers the nickel.

The protein resides in the cytoplasm. Required for maturation of urease via the functional incorporation of the urease nickel metallocenter. The sequence is that of Urease accessory protein UreF from Aliivibrio fischeri (strain ATCC 700601 / ES114) (Vibrio fischeri).